The following is a 558-amino-acid chain: Leucine-rich repeat-containing protein 71 (558 aa).

Residues 1–18 are compositionally biased toward low complexity; sequence MSSEPSTTGTSPRTPRPG. Disordered regions lie at residues 1-55 and 86-112; these read MSSE…NPEE and RVQQ…SASC. Residues 28-38 show a composition bias toward basic and acidic residues; it reads KKGDRAAKDKT. Polar residues predominate over residues 86 to 99; that stretch reads RVQQSSVPSASTSE. LRR repeat units follow at residues 196-216, 221-241, 253-274, and 281-302; these read TLRK…SKLM, TIVH…QLLG, TLVS…YIAD, and SLLW…KLAE. The interval 325–415 is disordered; that stretch reads GTQERSRSPS…DAAKAGKGKV (91 aa). Basic and acidic residues-rich tracts occupy residues 339-348 and 380-391; these read GDSKAEREKS and KTGEVVKKEEKL.

The protein is Leucine-rich repeat-containing protein 71 (Lrrc71) of Mus musculus (Mouse).